Consider the following 254-residue polypeptide: L-erythrulose-1-phosphate isomerase (254 aa).

His97 (electrophile) is an active-site residue. Glu170 functions as the Proton acceptor in the catalytic mechanism. The substrate site is built by Gly176 and Ser213.

The protein belongs to the triosephosphate isomerase family. As to quaternary structure, homodimer.

The protein localises to the cytoplasm. The enzyme catalyses L-erythrulose 1-phosphate = D-erythrulose 4-phosphate. It functions in the pathway carbohydrate metabolism; erythritol degradation. Functionally, catalyzes the isomerization of D-erythrulose-4P to L-erythrulose-1P. The chain is L-erythrulose-1-phosphate isomerase from Mesorhizobium japonicum (strain LMG 29417 / CECT 9101 / MAFF 303099) (Mesorhizobium loti (strain MAFF 303099)).